We begin with the raw amino-acid sequence, 1070 residues long: DNA-directed RNA polymerase subunit beta (1070 aa).

It belongs to the RNA polymerase beta chain family. In plastids the minimal PEP RNA polymerase catalytic core is composed of four subunits: alpha, beta, beta', and beta''. When a (nuclear-encoded) sigma factor is associated with the core the holoenzyme is formed, which can initiate transcription.

It is found in the plastid. The protein localises to the chloroplast. The catalysed reaction is RNA(n) + a ribonucleoside 5'-triphosphate = RNA(n+1) + diphosphate. In terms of biological role, DNA-dependent RNA polymerase catalyzes the transcription of DNA into RNA using the four ribonucleoside triphosphates as substrates. The protein is DNA-directed RNA polymerase subunit beta of Piper cenocladum (Ant piper).